A 249-amino-acid chain; its full sequence is Uridylate kinase (249 aa).

13–16 contacts ATP; that stretch reads KLSG. G55 is a binding site for UMP. ATP is bound by residues G56 and R60. Residues D75 and 136–143 contribute to the UMP site; that span reads IGNPFFTT. T163, F169, and D172 together coordinate ATP.

This sequence belongs to the UMP kinase family. Homohexamer.

The protein localises to the cytoplasm. It carries out the reaction UMP + ATP = UDP + ADP. Its pathway is pyrimidine metabolism; CTP biosynthesis via de novo pathway; UDP from UMP (UMPK route): step 1/1. Inhibited by UTP. Its function is as follows. Catalyzes the reversible phosphorylation of UMP to UDP. In Baumannia cicadellinicola subsp. Homalodisca coagulata, this protein is Uridylate kinase.